Here is an 86-residue protein sequence, read N- to C-terminus: uncharacterized protein (86 aa).

This is an uncharacterized protein from Beak and feather disease virus (BFDV).